Consider the following 88-residue polypeptide: Sec-independent protein translocase protein TatA (88 aa).

Residues 1–21 form a helical membrane-spanning segment; the sequence is MGSLSPWHWAILAVVVIVLFG. Basic and acidic residues predominate over residues 43-52; sequence MREMQSETKA. The interval 43–88 is disordered; that stretch reads MREMQSETKAEPSAIETNTANPTPVQSQRIDPAAATGQDQTEARPA. Residues 57 to 71 are compositionally biased toward polar residues; it reads IETNTANPTPVQSQR.

It belongs to the TatA/E family. In terms of assembly, the Tat system comprises two distinct complexes: a TatABC complex, containing multiple copies of TatA, TatB and TatC subunits, and a separate TatA complex, containing only TatA subunits. Substrates initially bind to the TatABC complex, which probably triggers association of the separate TatA complex to form the active translocon.

It is found in the cell membrane. In terms of biological role, part of the twin-arginine translocation (Tat) system that transports large folded proteins containing a characteristic twin-arginine motif in their signal peptide across membranes. TatA could form the protein-conducting channel of the Tat system. The protein is Sec-independent protein translocase protein TatA of Mycobacterium marinum (strain ATCC BAA-535 / M).